A 257-amino-acid chain; its full sequence is RNA polymerase sigma-G factor (257 aa).

Positions Asp-66–Ile-79 match the Polymerase core binding motif. Residues Gln-228–Lys-247 constitute a DNA-binding region (H-T-H motif).

Belongs to the sigma-70 factor family.

Sigma factors are initiation factors that promote the attachment of RNA polymerase to specific initiation sites and are then released. This sigma factor is responsible for the expression of sporulation specific genes. This chain is RNA polymerase sigma-G factor (sigG), found in Clostridium acetobutylicum (strain ATCC 824 / DSM 792 / JCM 1419 / IAM 19013 / LMG 5710 / NBRC 13948 / NRRL B-527 / VKM B-1787 / 2291 / W).